A 523-amino-acid polypeptide reads, in one-letter code: Coatomer subunit delta-2 (523 aa).

The segment at 218 to 243 is disordered; that stretch reads DSFASKPKGRPSAAATAPGKGLGMKL. Positions 282–523 constitute an MHD domain; the sequence is SDPVTVTIEE…RLVTANYQVV (242 aa).

This sequence belongs to the adaptor complexes medium subunit family. Delta-COP subfamily. Oligomeric complex that consists of at least the alpha, beta, beta', gamma, delta, epsilon and zeta subunits.

Its subcellular location is the cytoplasm. It is found in the golgi apparatus membrane. The protein resides in the cytoplasmic vesicle. The protein localises to the COPI-coated vesicle membrane. Its function is as follows. The coatomer is a cytosolic protein complex that binds to dilysine motifs and reversibly associates with Golgi non-clathrin-coated vesicles, which further mediate biosynthetic protein transport from the ER, via the Golgi up to the trans Golgi network. Coatomer complex is required for budding from Golgi membranes, and is essential for the retrograde Golgi-to-ER transport of dilysine-tagged proteins. The polypeptide is Coatomer subunit delta-2 (Oryza sativa subsp. japonica (Rice)).